The following is a 568-amino-acid chain: DNA mismatch repair protein MutL (568 aa).

This sequence belongs to the DNA mismatch repair MutL/HexB family.

Functionally, this protein is involved in the repair of mismatches in DNA. It is required for dam-dependent methyl-directed DNA mismatch repair. May act as a 'molecular matchmaker', a protein that promotes the formation of a stable complex between two or more DNA-binding proteins in an ATP-dependent manner without itself being part of a final effector complex. The sequence is that of DNA mismatch repair protein MutL from Nostoc punctiforme (strain ATCC 29133 / PCC 73102).